We begin with the raw amino-acid sequence, 823 residues long: Dolichyl-diphosphooligosaccharide--protein glycosyltransferase subunit STT3B (823 aa).

Residues 1-58 (MAEPSAPESKHKSSLNSSPWSGLMALGNSRHGHHGPGTQSASSAAAPKPGPPAGLSGG) form a disordered region. Alanine 2 carries the post-translational modification N-acetylalanine. Topologically, residues 2 to 41 (AEPSAPESKHKSSLNSSPWSGLMALGNSRHGHHGPGTQSA) are cytoplasmic. Phosphoserine is present on residues serine 13, serine 18, and serine 29. Residues 42–83 (SSAAAPKPGPPAGLSGGLSQPAGWQSLLSFTILFLAWLAGFS) form a helical membrane-spanning segment. The Lumenal portion of the chain corresponds to 84-170 (SRLFAVIRFE…VHIRDVCVFL (87 aa)). The short motif at 98–100 (EFD) is the DXD motif 1 element. Aspartate 100 is a Mn(2+) binding site. Residues 171 to 189 (APTFSGLTSISTFLLTREL) form a helical membrane-spanning segment. The Cytoplasmic segment spans residues 190 to 191 (WN). Residues 192 to 209 (QGAGLLAACFIAIVPGYI) form a helical membrane-spanning segment. The Lumenal segment spans residues 210-220 (SRSVAGSFDNE). Residues aspartate 218 and glutamate 220 each contribute to the Mn(2+) site. Residues 218–220 (DNE) carry the DXD motif 2 motif. Residues 221–240 (GIAIFALQFTYYLWVKSVKT) traverse the membrane as a helical segment. Residues 241 to 242 (GS) are Cytoplasmic-facing. Residues 243–257 (VFWTMCCCLSYFYMV) traverse the membrane as a helical segment. At 258–262 (SAWGG) the chain is on the lumenal side. A helical membrane pass occupies residues 263 to 279 (YVFIINLIPLHVFVLLL). At 280–284 (MQRYS) the chain is on the cytoplasmic side. A helical membrane pass occupies residues 285 to 310 (KRVYIAYSTFYIVGLILSMQIPFVGF). Residues 311-318 (QPIRTSEH) are Lumenal-facing. The chain crosses the membrane as a helical span at residues 319–338 (MAAAGVFALLQAYAFLQYLR). At 339–347 (DRLTKQEFQ) the chain is on the cytoplasmic side. Residues 348 to 368 (TLFFLGVSLAAGAVFLSVIYL) form a helical membrane-spanning segment. Over 369–407 (TYTGYIAPWSGRFYSLWDTGYAKIHIPIIASVSEHQPTT) the chain is Lumenal. Positions 399 to 402 (SVSE) match the SVSE motif motif. The chain crosses the membrane as a helical span at residues 408–430 (WVSFFFDLHILVCTFPAGLWFCI). Topologically, residues 431-436 (KNINDE) are cytoplasmic. The helical transmembrane segment at 437-453 (RVFVALYAISAVYFAGV) threads the bilayer. The Lumenal portion of the chain corresponds to 454-457 (MVRL). Arginine 456 provides a ligand contact to dolichyl diphosphooligosaccharide. Residues 458–479 (MLTLTPVVCMLSAIAFSNVFEH) form a helical membrane-spanning segment. At 480–523 (YLGDDMKRENPPVEDSSDEDDKRNPGNLYDKAGKVRKHVTEQEK) the chain is on the cytoplasmic side. A disordered region spans residues 487-526 (RENPPVEDSSDEDDKRNPGNLYDKAGKVRKHVTEQEKPEE). Serine 495 and serine 496 each carry phosphoserine. The segment covering 517–526 (HVTEQEKPEE) has biased composition (basic and acidic residues). The helical transmembrane segment at 524 to 549 (PEEGLGPNIKSIVTMLMLMLLMMFAV) threads the bilayer. The Lumenal segment spans residues 550 to 823 (HCTWVTSNAY…KGKKTSKKTV (274 aa)). The tract at residues 601–603 (WWD) is interacts with target acceptor peptide in protein substrate. Positions 601–605 (WWDYG) match the WWDYG motif motif. Tyrosine 606 is a binding site for dolichyl diphosphooligosaccharide. N-linked (GlcNAc...) asparagine glycosylation is found at asparagine 613 and asparagine 620. Asparagine 624 is a glycosylation site (N-linked (GlcNAc...) (high mannose) asparagine). Asparagine 638 is a glycosylation site (N-linked (GlcNAc...) asparagine). Residues 668–675 (DINKFLWM) carry the DK motif motif.

This sequence belongs to the STT3 family. Component of the oligosaccharyltransferase (OST) complex. There are 2 OST complexes, OST-A and OST-B, which contain STT3A or STT3B as catalytic subunit, respectively. OST-A and OST-B contain common core subunits RPN1, RPN2, OST48, OST4, DAD1 and TMEM258, and OST-B contains either MAGT1 or TUSC3 as specific accessory subunit. Requires Mg(2+) as cofactor. The cofactor is Mn(2+).

The protein localises to the endoplasmic reticulum membrane. The enzyme catalyses a di-trans,poly-cis-dolichyl diphosphooligosaccharide + L-asparaginyl-[protein] = N(4)-(oligosaccharide-(1-&gt;4)-N-acetyl-beta-D-glucosaminyl-(1-&gt;4)-N-acetyl-beta-D-glucosaminyl)-L-asparaginyl-[protein] + a di-trans,poly-cis-dolichyl diphosphate + H(+). It functions in the pathway protein modification; protein glycosylation. Catalytic subunit of the oligosaccharyl transferase (OST) complex that catalyzes the initial transfer of a defined glycan (Glc(3)Man(9)GlcNAc(2) in eukaryotes) from the lipid carrier dolichol-pyrophosphate to an asparagine residue within an Asn-X-Ser/Thr consensus motif in nascent polypeptide chains, the first step in protein N-glycosylation. N-glycosylation occurs cotranslationally and the complex associates with the Sec61 complex at the channel-forming translocon complex that mediates protein translocation across the endoplasmic reticulum (ER). All subunits are required for a maximal enzyme activity. This subunit contains the active site and the acceptor peptide and donor lipid-linked oligosaccharide (LLO) binding pockets. STT3B is present in a small subset of OST complexes and mediates both cotranslational and post-translational N-glycosylation of target proteins: STT3B-containing complexes are required for efficient post-translational glycosylation and while they are less competent than STT3A-containing complexes for cotranslational glycosylation, they have the ability to mediate glycosylation of some nascent sites that are not accessible for STT3A. STT3B-containing complexes also act post-translationally and mediate modification of skipped glycosylation sites in unfolded proteins. Plays a role in ER-associated degradation (ERAD) pathway that mediates ubiquitin-dependent degradation of misfolded endoplasmic reticulum proteins by mediating N-glycosylation of unfolded proteins, which are then recognized by the ERAD pathway and targeted for degradation. The sequence is that of Dolichyl-diphosphooligosaccharide--protein glycosyltransferase subunit STT3B from Mus musculus (Mouse).